The following is a 322-amino-acid chain: 3-alpha-hydroxysteroid dehydrogenase (322 aa).

Residue M1 is modified to Blocked amino end (Met). NADP(+) contacts are provided by residues 20 to 24 and D50; that span reads GFGTT. The active-site Proton donor is the Y55. H117 lines the substrate pocket. Residues 166-167, Q190, and 216-221 each bind NADP(+); these read SN and YCTLGS. W227 is a binding site for substrate. Position 270–280 (270–280) interacts with NADP(+); sequence RSFNAKRIKEL.

It belongs to the aldo/keto reductase family. Monomer. In terms of tissue distribution, in brain, highest levels found in olfactory bulb. Moderate levels present in cerebellum, cerebral cortex, hypothalamus and pituitary. Low levels present in amygdala, brain stem, caudate putamen, cingulate cortex, hippocampus, midbrain, and thalamus.

Its subcellular location is the cytoplasm. It carries out the reaction a 3alpha-hydroxysteroid + NADP(+) = a 3-oxosteroid + NADPH + H(+). It catalyses the reaction a 3alpha-hydroxysteroid + NAD(+) = a 3-oxosteroid + NADH + H(+). With respect to regulation, potently inhibited by the nonsteroidal anti-inflammatory drugs (NSAID). Its function is as follows. Besides being a 3-alpha-hydroxysteroid dehydrogenase, the enzyme can accomplish diverse functions: as quinone reductase, as an aromatic alcohol dehydrogenase, as dihydrodiol dehydrogenase, and as 9-, 11-, and 15-hydroxyprostaglandin dehydrogenase. This Rattus norvegicus (Rat) protein is 3-alpha-hydroxysteroid dehydrogenase (Akr1c9).